The sequence spans 867 residues: Cation/H(+) antiporter 23, chloroplastic (867 aa).

A run of 12 helical transmembrane segments spans residues 43-63 (SGSTLASSLPFFITQLFVANL), 75-95 (LYLPPFVAQILCGLLFSPSVL), 112-132 (MVLETFANLALVYNIFLLGLG), 146-166 (VIIAFTGLLVALPVGAFLYYL), 175-195 (IISGCVFWSVALACTNFPDLA), 212-232 (AMCAAIVTDLCTWVLLVFGFA), 242-262 (KMMPFVIITTAIFVLLCIFVI), 283-303 (HVWFILGGVVLCGLITDACGV), 336-356 (GILMPLFYIICGLRADIGFML), 362-382 (FMMVVVICSSFLVKIVTTVIT), 393-413 (AFAIGALMNTKGTLSLVVLNA), and 427-447 (HMTIALLVMSLVVEPLLAFAY). Residues 848–867 (SMYEDEDEDDEEDHQYGIHR) are disordered. Acidic residues predominate over residues 851–860 (EDEDEDDEED).

Belongs to the monovalent cation:proton antiporter 2 (CPA2) transporter (TC 2.A.37) family. CHX (TC 2.A.37.4) subfamily. In terms of tissue distribution, specifically expressed in flower buds and pollen. Expressed in leaves, roots and stems.

The protein localises to the plastid. The protein resides in the chloroplast membrane. It localises to the endoplasmic reticulum membrane. Operates as a K(+)/H(+) antiporter or Na(+)/H(+) antiporter of the chloroplast envelope that functions in pH homeostasis and chloroplast development. Monovalent cation transporter with a preference for Cs(+), K(+) and Rb(+) relative to Na(+) or Li(+). Required for pollen tube guidance, but not for normal pollen development. May also be involved in the development or function of the female gametophyte. The chain is Cation/H(+) antiporter 23, chloroplastic (CHX23) from Arabidopsis thaliana (Mouse-ear cress).